Here is a 573-residue protein sequence, read N- to C-terminus: Sterol esterase 1 (573 aa).

Topologically, residues 1-12 (MGVSAVLKRARN) are cytoplasmic. The stretch at 13-33 (LLATFIVCCFMAVVLVLALAH) is an intramembrane region. At 34-573 (HFINEHRDTR…TELEMVAEKA (540 aa)) the chain is on the cytoplasmic side. The active-site Nucleophile is serine 315. Catalysis depends on charge relay system residues aspartate 489 and histidine 520.

The protein belongs to the AB hydrolase superfamily. Not N-glycosylated.

The protein resides in the lipid droplet. It is found in the membrane. The catalysed reaction is a sterol ester + H2O = a sterol + a fatty acid + H(+). In terms of biological role, mediates the hydrolysis of steryl esters, thereby playing a central role in lipid metabolism. Under heme-deficient conditions, it constitutes the major steryl ester hydrolase, suggesting that it plays a central role in mobilization of steryl esters under anaerobic conditions. The protein is Sterol esterase 1 (YEH1) of Saccharomyces cerevisiae (strain ATCC 204508 / S288c) (Baker's yeast).